The chain runs to 339 residues: Heat-inducible transcription repressor HrcA (339 aa).

The protein belongs to the HrcA family.

Negative regulator of class I heat shock genes (grpE-dnaK-dnaJ and groELS operons). Prevents heat-shock induction of these operons. The sequence is that of Heat-inducible transcription repressor HrcA from Leifsonia xyli subsp. xyli (strain CTCB07).